The chain runs to 127 residues: Ribosome-binding factor A (127 aa).

Belongs to the RbfA family. In terms of assembly, monomer. Binds 30S ribosomal subunits, but not 50S ribosomal subunits or 70S ribosomes.

The protein localises to the cytoplasm. One of several proteins that assist in the late maturation steps of the functional core of the 30S ribosomal subunit. Associates with free 30S ribosomal subunits (but not with 30S subunits that are part of 70S ribosomes or polysomes). Required for efficient processing of 16S rRNA. May interact with the 5'-terminal helix region of 16S rRNA. This chain is Ribosome-binding factor A, found in Stenotrophomonas maltophilia (strain K279a).